The following is an 861-amino-acid chain: Probable linoleate 9S-lipoxygenase 8 (861 aa).

Positions 33 to 160 (FTDLASSLTG…NYKSDRIFFA (128 aa)) constitute a PLAT domain. The region spanning 163–861 (PYLPSETPEL…GKGIPNSVSI (699 aa)) is the Lipoxygenase domain. Positions 220–245 (TLGGSAEYPYPRRGRTGRPPTRTDPK) are disordered. Residues histidine 522, histidine 527, histidine 713, asparagine 717, and isoleucine 861 each coordinate Fe cation.

It belongs to the lipoxygenase family. As to quaternary structure, monomer. Fe cation serves as cofactor.

Its subcellular location is the cytoplasm. The catalysed reaction is (9Z,12Z)-octadecadienoate + O2 = (9S)-hydroperoxy-(10E,12Z)-octadecadienoate. It participates in lipid metabolism; oxylipin biosynthesis. Functionally, plant lipoxygenases may be involved in a number of diverse aspects of plant physiology including growth and development, pest resistance, and senescence or responses to wounding. Catalyzes the hydroperoxidation of lipids containing a cis,cis-1,4-pentadiene structure. The chain is Probable linoleate 9S-lipoxygenase 8 (LOX1.8) from Solanum tuberosum (Potato).